A 288-amino-acid chain; its full sequence is Proteasome assembly chaperone 1 (288 aa).

The interval 1–37 is disordered; that stretch reads MAATFFGEVVKAPCRAGTEDEEEEDEGRRETPEDREV. N-acetylalanine is present on alanine 2. Threonine 18 carries the phosphothreonine modification. The span at 26-37 shows a compositional bias: basic and acidic residues; that stretch reads EGRRETPEDREV. The residue at position 54 (threonine 54) is a Phosphothreonine. Residue serine 180 is modified to Phosphoserine. N6-acetyllysine is present on lysine 264.

This sequence belongs to the PSMG1 family. Forms a heterodimer with PSMG2. The PSMG1-PSMG2 heterodimer interacts directly with the PSMA5 and PSMA7 proteasome alpha subunits. Degraded by the proteasome upon completion of 20S proteasome maturation.

It is found in the cytoplasm. The protein resides in the endoplasmic reticulum. In terms of biological role, chaperone protein which promotes assembly of the 20S proteasome as part of a heterodimer with PSMG2. The PSMG1-PSMG2 heterodimer binds to the PSMA5 and PSMA7 proteasome subunits, promotes assembly of the proteasome alpha subunits into the heteroheptameric alpha ring and prevents alpha ring dimerization. The sequence is that of Proteasome assembly chaperone 1 (PSMG1) from Callithrix jacchus (White-tufted-ear marmoset).